We begin with the raw amino-acid sequence, 370 residues long: Phosphoserine aminotransferase (370 aa).

Arg-38 provides a ligand contact to L-glutamate. The pyridoxal 5'-phosphate site is built by Trp-101, Thr-143, Asp-166, and Gln-189. Lys-190 carries the post-translational modification N6-(pyridoxal phosphate)lysine. Residue 243–244 (NT) participates in pyridoxal 5'-phosphate binding.

This sequence belongs to the class-V pyridoxal-phosphate-dependent aminotransferase family. SerC subfamily. As to quaternary structure, homodimer. The cofactor is pyridoxal 5'-phosphate.

The protein resides in the cytoplasm. It catalyses the reaction O-phospho-L-serine + 2-oxoglutarate = 3-phosphooxypyruvate + L-glutamate. The catalysed reaction is 4-(phosphooxy)-L-threonine + 2-oxoglutarate = (R)-3-hydroxy-2-oxo-4-phosphooxybutanoate + L-glutamate. Its pathway is amino-acid biosynthesis; L-serine biosynthesis; L-serine from 3-phospho-D-glycerate: step 2/3. It participates in cofactor biosynthesis; pyridoxine 5'-phosphate biosynthesis; pyridoxine 5'-phosphate from D-erythrose 4-phosphate: step 3/5. Functionally, catalyzes the reversible conversion of 3-phosphohydroxypyruvate to phosphoserine and of 3-hydroxy-2-oxo-4-phosphonooxybutanoate to phosphohydroxythreonine. The chain is Phosphoserine aminotransferase (serC) from Methanosarcina barkeri (strain Fusaro / DSM 804).